Reading from the N-terminus, the 427-residue chain is Enolase (427 aa).

Gln-163 contacts (2R)-2-phosphoglycerate. Glu-205 (proton donor) is an active-site residue. Residues Asp-242, Glu-285, and Asp-312 each coordinate Mg(2+). (2R)-2-phosphoglycerate-binding residues include Lys-337, Arg-366, Ser-367, and Lys-388. Catalysis depends on Lys-337, which acts as the Proton acceptor.

Belongs to the enolase family. Requires Mg(2+) as cofactor.

It localises to the cytoplasm. It is found in the secreted. The protein localises to the cell surface. The enzyme catalyses (2R)-2-phosphoglycerate = phosphoenolpyruvate + H2O. Its pathway is carbohydrate degradation; glycolysis; pyruvate from D-glyceraldehyde 3-phosphate: step 4/5. Catalyzes the reversible conversion of 2-phosphoglycerate (2-PG) into phosphoenolpyruvate (PEP). It is essential for the degradation of carbohydrates via glycolysis. The chain is Enolase from Xanthobacter autotrophicus (strain ATCC BAA-1158 / Py2).